A 298-amino-acid polypeptide reads, in one-letter code: Rhodomycin D methylesterase DnrP (298 aa).

The region spanning 25–277 is the AB hydrolase-1 domain; the sequence is PLLLIAGGNL…VEIENMGHAL (253 aa).

It belongs to the methyl esterase DnrP family.

The catalysed reaction is rhodomycin D + H2O = 10-carboxy-13-deoxycarminomycin + methanol + H(+). It carries out the reaction 4-O-methylrhodomycin D + H2O = 10-carboxy-13-deoxydaunorubicin + methanol + H(+). It participates in antibiotic biosynthesis; daunorubicin biosynthesis. The protein operates within antibiotic biosynthesis; carminomycin biosynthesis. In terms of biological role, involved in the biosynthesis of the anthracyclines carminomycin and daunorubicin (daunomycin) which are aromatic polyketide antibiotics that exhibit high cytotoxicity and are widely applied in the chemotherapy of a variety of cancers. Catalyzes the removal of methyl group from the carbomethoxy group of rhodomycin D (10-carbomethoxy-13-deoxycarminomycin) and 4-O-methylrhodomycin D to yield 10-carboxy-13-deoxycarminomycin and 10-carboxy-13-deoxydaunorubicin, respectively. Could be also involved in the decarboxylation of 10-carboxy-13-deoxycarminomycin and 10-carboxy-13-deoxydaunorubicin to yield 13-deoxycarminomycin and 13-deoxydaunorubicin, respectively. It seems that DnrK may influence the ability of DnrP to carry out the decarboxylation. The protein is Rhodomycin D methylesterase DnrP (dnrP) of Streptomyces peucetius.